Reading from the N-terminus, the 156-residue chain is ATP synthase subunit b (156 aa).

The chain crosses the membrane as a helical span at residues Ile3–Thr23.

This sequence belongs to the ATPase B chain family. F-type ATPases have 2 components, F(1) - the catalytic core - and F(0) - the membrane proton channel. F(1) has five subunits: alpha(3), beta(3), gamma(1), delta(1), epsilon(1). F(0) has three main subunits: a(1), b(2) and c(10-14). The alpha and beta chains form an alternating ring which encloses part of the gamma chain. F(1) is attached to F(0) by a central stalk formed by the gamma and epsilon chains, while a peripheral stalk is formed by the delta and b chains.

It is found in the cell inner membrane. Its function is as follows. F(1)F(0) ATP synthase produces ATP from ADP in the presence of a proton or sodium gradient. F-type ATPases consist of two structural domains, F(1) containing the extramembraneous catalytic core and F(0) containing the membrane proton channel, linked together by a central stalk and a peripheral stalk. During catalysis, ATP synthesis in the catalytic domain of F(1) is coupled via a rotary mechanism of the central stalk subunits to proton translocation. In terms of biological role, component of the F(0) channel, it forms part of the peripheral stalk, linking F(1) to F(0). This Stenotrophomonas maltophilia (strain R551-3) protein is ATP synthase subunit b.